We begin with the raw amino-acid sequence, 437 residues long: Nuclear hormone receptor family member nhr-28 (437 aa).

Residues 5–80 (KSPCSVCGEA…VGMRKSAVQR (76 aa)) constitute a DNA-binding region (nuclear receptor). NR C4-type zinc fingers lie at residues 8 to 28 (CSVCGEAGDGAHFGAEACRAC) and 44 to 68 (CRAMGTCVIQKNVRCMCRACRFTKC). Residues 115–376 (YEETGMPTLS…ETFYELVSGR (262 aa)) enclose the NR LBD domain.

The protein belongs to the nuclear hormone receptor family. As to expression, expressed in the pharynx, intestine and hypodermis.

Its subcellular location is the nucleus. Its function is as follows. Orphan nuclear receptor. This is Nuclear hormone receptor family member nhr-28 (nhr-28) from Caenorhabditis elegans.